A 26-amino-acid polypeptide reads, in one-letter code: SSLTIQFVEGQFVDSYDPTIENTFTK.

Ser-1, Ser-2, Val-13, Tyr-16, and Thr-19 together coordinate GTP. Residue Ser-1 participates in Mg(2+) binding. The Effector region signature appears at 16 to 24; sequence YDPTIENTF. Thr-19 contacts Mg(2+).

The protein belongs to the small GTPase superfamily. Rheb family.

It catalyses the reaction GTP + H2O = GDP + phosphate + H(+). In terms of biological role, binds GTP and exhibits intrinsic GTPase activity. The chain is GTP-binding protein Rheb from Crocodylus siamensis (Siamese crocodile).